The following is a 200-amino-acid chain: Holliday junction resolvase RecU (200 aa).

The disordered stretch occupies residues 1 to 25 (MTIRYPNGKRYNQASQPQKTPIKTH). The segment covering 10 to 25 (RYNQASQPQKTPIKTH) has biased composition (polar residues). Mg(2+) is bound by residues threonine 85, aspartate 87, glutamate 100, and glutamine 119.

It belongs to the RecU family. It depends on Mg(2+) as a cofactor.

The protein localises to the cytoplasm. It catalyses the reaction Endonucleolytic cleavage at a junction such as a reciprocal single-stranded crossover between two homologous DNA duplexes (Holliday junction).. In terms of biological role, endonuclease that resolves Holliday junction intermediates in genetic recombination. Cleaves mobile four-strand junctions by introducing symmetrical nicks in paired strands. Promotes annealing of linear ssDNA with homologous dsDNA. Required for DNA repair, homologous recombination and chromosome segregation. The chain is Holliday junction resolvase RecU from Bacillus cereus (strain B4264).